The sequence spans 108 residues: NADH dehydrogenase [ubiquinone] flavoprotein 3, mitochondrial (108 aa).

The N-terminal 34 residues, 1-34, are a transit peptide targeting the mitochondrion; that stretch reads MAAPCLLRQGRAGALKTMLQEAQVFRGLASTVSL. Positions 33–72 are disordered; it reads SLSAESGKSEKGQPQNSKKQSPPKKPAPVPAEPFDNTTYK. Ser105 bears the Phosphoserine mark.

Belongs to the complex I NDUFV3 subunit family. Complex I is composed of 45 different subunits. This is a component of the flavoprotein-sulfur (FP) fragment of the enzyme.

Its subcellular location is the mitochondrion inner membrane. In terms of biological role, accessory subunit of the mitochondrial membrane respiratory chain NADH dehydrogenase (Complex I), that is believed not to be involved in catalysis. Complex I functions in the transfer of electrons from NADH to the respiratory chain. The immediate electron acceptor for the enzyme is believed to be ubiquinone. May be the terminally assembled subunit of Complex I. This is NADH dehydrogenase [ubiquinone] flavoprotein 3, mitochondrial (NDUFV3) from Homo sapiens (Human).